Reading from the N-terminus, the 316-residue chain is Ribose-phosphate pyrophosphokinase (316 aa).

ATP is bound by residues 41–43 and 100–101; these read DGE and RQ. Positions 134 and 175 each coordinate Mg(2+). Lysine 198 is an active-site residue. D-ribose 5-phosphate contacts are provided by residues arginine 200, aspartate 224, and 228–232; that span reads DTARS.

It belongs to the ribose-phosphate pyrophosphokinase family. Class I subfamily. Homohexamer. It depends on Mg(2+) as a cofactor.

It is found in the cytoplasm. It carries out the reaction D-ribose 5-phosphate + ATP = 5-phospho-alpha-D-ribose 1-diphosphate + AMP + H(+). Its pathway is metabolic intermediate biosynthesis; 5-phospho-alpha-D-ribose 1-diphosphate biosynthesis; 5-phospho-alpha-D-ribose 1-diphosphate from D-ribose 5-phosphate (route I): step 1/1. In terms of biological role, involved in the biosynthesis of the central metabolite phospho-alpha-D-ribosyl-1-pyrophosphate (PRPP) via the transfer of pyrophosphoryl group from ATP to 1-hydroxyl of ribose-5-phosphate (Rib-5-P). The protein is Ribose-phosphate pyrophosphokinase of Thermosipho africanus (strain TCF52B).